Reading from the N-terminus, the 328-residue chain is MPLHHLTRFPRLELIGAPTPLEYLPRLSDYLGREIYIKRDDVTPIAMGGNKLRKLEFLVADALREGADTLITAGAIQSNHVRQTAAVAAKLGLHCVALLENPIGTTAENYLTNGNRLLLDLFNTQIEMCDALTDPDAQLQTLATRIEAQGFRPYVIPVGGSSALGAMGYVESALEIAQQCEEVVGLSSVVVASGSAGTHAGLAVGLEHLMPDVELIGVTVSRSVAEQKPKVIALQQAIAGQLALTATADIHLWDDYFAPGYGVPNDAGMEAVKLLASLEGVLLDPVYTGKAMAGLIDGISQKRFNDDGPSLFIHTGGAPALFAYHPHV.

An N6-(pyridoxal phosphate)lysine modification is found at Lys51.

This sequence belongs to the ACC deaminase/D-cysteine desulfhydrase family. Homodimer. It depends on pyridoxal 5'-phosphate as a cofactor.

It carries out the reaction D-cysteine + H2O = hydrogen sulfide + pyruvate + NH4(+) + H(+). Catalyzes the alpha,beta-elimination reaction of D-cysteine and of several D-cysteine derivatives. It could be a defense mechanism against D-cysteine. This Salmonella paratyphi B (strain ATCC BAA-1250 / SPB7) protein is D-cysteine desulfhydrase.